The sequence spans 129 residues: Small ribosomal subunit protein uS11 (129 aa).

It belongs to the universal ribosomal protein uS11 family. As to quaternary structure, part of the 30S ribosomal subunit. Interacts with proteins S7 and S18. Binds to IF-3.

In terms of biological role, located on the platform of the 30S subunit, it bridges several disparate RNA helices of the 16S rRNA. Forms part of the Shine-Dalgarno cleft in the 70S ribosome. This chain is Small ribosomal subunit protein uS11, found in Xanthobacter autotrophicus (strain ATCC BAA-1158 / Py2).